The following is a 490-amino-acid chain: MALRAVWLIRHEPGTPLGGTVRFSRRYPTVEKRAKAFNGMTYVPVPEDGPFLRALLFQLRLLDDDKDFMERRDGCSRINKTSIYGLSVGGEELWPVIAFLRDSMIYASVPLVEQALSPRPPLISISGVSQGLELLLGIQDFLYSSQKNDTDLHTKLSQLPDLLLQACPLGTLLDANLQNSLNSINSVSVTQPQKQPAWKVGAYKGKAQISISITETVKCMQYGKQDIADTWQVAGTVACKCDLEGVMPAVTISLSLPTNGSPLQDIIVHPCVTSLDSAILTSSSIDTMDDSAFSGPYKFPFTPPLESFNLCHYTSQVPVPPILGSYHMKEEGVQLKVTVNFKLHESVRNNFEVCEAHIPFYNRGPITHLEYKASFGQLEVFREKSLLVWIIGQKFPKSMEISLSGTLTFGVKGHNKQPFDHICIGNTAYIKLNFRIADYTLTGCYADQHSVQVFASGKPKISAYRKLISSDYYIWNSKAPAPVTYASLLP.

One can recognise an MHD domain in the interval 206–476 (KAQISISITE…LISSDYYIWN (271 aa)).

The protein belongs to the adaptor complexes medium subunit family. In terms of assembly, probably part of the adaptor protein complex 5 (AP-5) a tetramer composed of AP5B1, AP5M1, AP5S1 and AP5Z1. As to expression, widely expressed, including in small intestine and testis. In small intestine, highly expressed in cytoplasm of villi epithelial cells and internal glands. In testis, selectively expressed in maturing sperm cells (at protein level).

The protein localises to the cytoplasm. Its subcellular location is the cytosol. It localises to the late endosome membrane. It is found in the lysosome membrane. As part of AP-5, a probable fifth adaptor protein complex it may be involved in endosomal transport. The polypeptide is AP-5 complex subunit mu-1 (Ap5m1) (Mus musculus (Mouse)).